The chain runs to 868 residues: Leucine--tRNA ligase (868 aa).

The short motif at 42–52 (PYPSGKLHMGH) is the 'HIGH' region element. The short motif at 627 to 631 (KMSKS) is the 'KMSKS' region element. Lysine 630 provides a ligand contact to ATP.

The protein belongs to the class-I aminoacyl-tRNA synthetase family.

It is found in the cytoplasm. It catalyses the reaction tRNA(Leu) + L-leucine + ATP = L-leucyl-tRNA(Leu) + AMP + diphosphate. The polypeptide is Leucine--tRNA ligase (Pseudomonas syringae pv. syringae (strain B728a)).